The following is a 277-amino-acid chain: Caspase-3 (277 aa).

The residue at position 1 (Met-1) is an N-acetylmethionine. 2 consecutive propeptides follow at residues 1-9 (MENNETSVD) and 10-28 (SKSIKNFEVKTIHGSKSMD). Residue Lys-11 is modified to N6-acetyllysine. The residue at position 26 (Ser-26) is a Phosphoserine. Residues His-121 and Cys-163 contribute to the active site. Cys-163 bears the S-nitrosocysteine; in inhibited form mark.

It belongs to the peptidase C14A family. As to quaternary structure, heterotetramer that consists of two anti-parallel arranged heterodimers, each one formed by a 17 kDa (p17) and a 12 kDa (p12) subunit. Interacts with BIRC6/bruce. Post-translationally, cleavage by granzyme B, caspase-6, caspase-8 and caspase-10 generates the two active subunits. Additional processing of the propeptides is likely due to the autocatalytic activity of the activated protease. Active heterodimers between the small subunit of caspase-7 protease and the large subunit of caspase-3 also occur and vice versa. In terms of processing, S-nitrosylated on its catalytic site cysteine in unstimulated cell lines and denitrosylated upon activation of the Fas apoptotic pathway, associated with an increase in intracellular caspase activity. Fas therefore activates caspase-3 not only by inducing the cleavage of the caspase zymogen to its active subunits, but also by stimulating the denitrosylation of its active site thiol. Ubiquitinated by BIRC6; this activity is inhibited by DIABLO/SMAC.

It localises to the cytoplasm. The catalysed reaction is Strict requirement for an Asp residue at positions P1 and P4. It has a preferred cleavage sequence of Asp-Xaa-Xaa-Asp-|- with a hydrophobic amino-acid residue at P2 and a hydrophilic amino-acid residue at P3, although Val or Ala are also accepted at this position.. Inhibited by BIRC6; following inhibition of BIRC6-caspase binding by DIABLO/SMAC, BIRC6 is subjected to caspase cleavage, leading to an increase in active caspases. In terms of biological role, involved in the activation cascade of caspases responsible for apoptosis execution. At the onset of apoptosis, it proteolytically cleaves poly(ADP-ribose) polymerase PARP1 at a '216-Asp-|-Gly-217' bond. Cleaves and activates sterol regulatory element binding proteins (SREBPs) between the basic helix-loop-helix leucine zipper domain and the membrane attachment domain. Cleaves and activates caspase-6, -7 and -9 (CASP6, CASP7 and CASP9, respectively). Cleaves and inactivates interleukin-18 (IL18). Triggers cell adhesion in sympathetic neurons through RET cleavage. Cleaves IL-1 beta between an Asp and an Ala, releasing the mature cytokine which is involved in a variety of inflammatory processes. Cleaves and inhibits serine/threonine-protein kinase AKT1 in response to oxidative stress. Acts as an inhibitor of type I interferon production during virus-induced apoptosis by mediating cleavage of antiviral proteins CGAS, IRF3 and MAVS, thereby preventing cytokine overproduction. Also involved in pyroptosis by mediating cleavage and activation of gasdermin-E (GSDME). Cleaves XRCC4 and phospholipid scramblase proteins XKR4, XKR8 and XKR9, leading to promote phosphatidylserine exposure on apoptotic cell surface. Cleaves BIRC6 following inhibition of BIRC6-caspase binding by DIABLO/SMAC. This chain is Caspase-3 (CASP3), found in Mesocricetus auratus (Golden hamster).